A 20-amino-acid chain; its full sequence is Superoxide dismutase [Mn], mitochondrial (20 aa).

This sequence belongs to the iron/manganese superoxide dismutase family. As to quaternary structure, homotetramer. It depends on Mn(2+) as a cofactor.

The protein localises to the mitochondrion matrix. It catalyses the reaction 2 superoxide + 2 H(+) = H2O2 + O2. Its function is as follows. Destroys superoxide anion radicals which are normally produced within the cells and which are toxic to biological systems. This chain is Superoxide dismutase [Mn], mitochondrial (SODA), found in Hordeum vulgare (Barley).